We begin with the raw amino-acid sequence, 239 residues long: ATP-dependent dethiobiotin synthetase BioD (239 aa).

Position 15 to 20 (15 to 20 (EIGKTF)) interacts with ATP. Residue threonine 19 participates in Mg(2+) binding. Residue lysine 40 is part of the active site. ATP-binding positions include aspartate 57, 118-121 (EGVG), and 178-179 (NH). Residues aspartate 57 and glutamate 118 each coordinate Mg(2+).

This sequence belongs to the dethiobiotin synthetase family. As to quaternary structure, homodimer. Requires Mg(2+) as cofactor.

The protein resides in the cytoplasm. It carries out the reaction (7R,8S)-7,8-diammoniononanoate + CO2 + ATP = (4R,5S)-dethiobiotin + ADP + phosphate + 3 H(+). Its pathway is cofactor biosynthesis; biotin biosynthesis; biotin from 7,8-diaminononanoate: step 1/2. In terms of biological role, catalyzes a mechanistically unusual reaction, the ATP-dependent insertion of CO2 between the N7 and N8 nitrogen atoms of 7,8-diaminopelargonic acid (DAPA, also called 7,8-diammoniononanoate) to form a ureido ring. The polypeptide is ATP-dependent dethiobiotin synthetase BioD (Burkholderia orbicola (strain MC0-3)).